The following is a 403-amino-acid chain: Protein WVD2-like 6 (403 aa).

2 disordered regions span residues 1-179 (MDSE…ALPN) and 254-403 (LKKI…AVEP). Residues 25–56 (GDSSNGNGGTSENLECCSTQHPMEASEGTQNE) show a composition bias toward polar residues. Positions 103-118 (SVAPNVKPVKSPKSKS) are enriched in low complexity. At serine 113 the chain carries Phosphoserine. Composition is skewed to basic and acidic residues over residues 120–132 (NGREAHVTKHGNH), 139–153 (GTRDKPKLRETRKQV), and 162–171 (QYPKEDDGKP). The segment covering 263–273 (KSPKLGRKKTN) has biased composition (basic residues). Residues 336 to 348 (KVAPAKAVTASTK) show a composition bias toward low complexity. Basic and acidic residues predominate over residues 385 to 394 (VNEDRNESHM).

This sequence belongs to the TPX2 family. In terms of tissue distribution, expressed in seedlings.

The protein localises to the cytoplasm. The protein resides in the cytoskeleton. Functionally, microtubule-associated protein (MAP) that regulates the orientation of interphase cortical microtubules. This Arabidopsis thaliana (Mouse-ear cress) protein is Protein WVD2-like 6.